The primary structure comprises 570 residues: Proline--tRNA ligase (570 aa).

The protein belongs to the class-II aminoacyl-tRNA synthetase family. ProS type 1 subfamily. As to quaternary structure, homodimer.

It localises to the cytoplasm. The catalysed reaction is tRNA(Pro) + L-proline + ATP = L-prolyl-tRNA(Pro) + AMP + diphosphate. In terms of biological role, catalyzes the attachment of proline to tRNA(Pro) in a two-step reaction: proline is first activated by ATP to form Pro-AMP and then transferred to the acceptor end of tRNA(Pro). As ProRS can inadvertently accommodate and process non-cognate amino acids such as alanine and cysteine, to avoid such errors it has two additional distinct editing activities against alanine. One activity is designated as 'pretransfer' editing and involves the tRNA(Pro)-independent hydrolysis of activated Ala-AMP. The other activity is designated 'posttransfer' editing and involves deacylation of mischarged Ala-tRNA(Pro). The misacylated Cys-tRNA(Pro) is not edited by ProRS. This chain is Proline--tRNA ligase, found in Pelotomaculum thermopropionicum (strain DSM 13744 / JCM 10971 / SI).